We begin with the raw amino-acid sequence, 497 residues long: Serine hydroxymethyltransferase (497 aa).

Residues L176 and 180–182 (GHL) each bind (6S)-5,6,7,8-tetrahydrofolate. K289 carries the N6-(pyridoxal phosphate)lysine modification.

The protein belongs to the SHMT family. Homodimer. Requires pyridoxal 5'-phosphate as cofactor.

The protein resides in the cytoplasm. It carries out the reaction (6R)-5,10-methylene-5,6,7,8-tetrahydrofolate + glycine + H2O = (6S)-5,6,7,8-tetrahydrofolate + L-serine. It functions in the pathway one-carbon metabolism; tetrahydrofolate interconversion. The protein operates within amino-acid biosynthesis; glycine biosynthesis; glycine from L-serine: step 1/1. Functionally, catalyzes the reversible interconversion of serine and glycine with tetrahydrofolate (THF) serving as the one-carbon carrier. This reaction serves as the major source of one-carbon groups required for the biosynthesis of purines, thymidylate, methionine, and other important biomolecules. Also exhibits THF-independent aldolase activity toward beta-hydroxyamino acids, producing glycine and aldehydes, via a retro-aldol mechanism. The protein is Serine hydroxymethyltransferase of Chlamydia muridarum (strain MoPn / Nigg).